A 304-amino-acid polypeptide reads, in one-letter code: Putative S-adenosyl-L-methionine-dependent methyltransferase MSMEG_1482/MSMEI_1446 (304 aa).

S-adenosyl-L-methionine is bound by residues Asp-130 and 159–160 (DL).

It belongs to the UPF0677 family.

In terms of biological role, exhibits S-adenosyl-L-methionine-dependent methyltransferase activity. This is Putative S-adenosyl-L-methionine-dependent methyltransferase MSMEG_1482/MSMEI_1446 from Mycolicibacterium smegmatis (strain ATCC 700084 / mc(2)155) (Mycobacterium smegmatis).